Reading from the N-terminus, the 38-residue chain is Mu-hexatoxin-Mg1b (38 aa).

Intrachain disulfides connect C1/C15, C8/C20, and C14/C34. Position 38 is a serine amide (S38).

This sequence belongs to the neurotoxin 14 (magi-1) family. 09 (magi-1) subfamily. As to expression, expressed by the venom gland.

The protein localises to the secreted. Functionally, insecticidal neurotoxin. Shows competition for site 3 of insect voltage-gated sodium channels (Nav). In Macrothele gigas (Japanese funnel web spider), this protein is Mu-hexatoxin-Mg1b.